The following is a 537-amino-acid chain: MNFRNLIASGSRLGKRFCATVFAPASATGIVEASVSSPAAANVVEASVSSPAAENGVRTSVAAPTVASRQRELYKKLSMLSVTGGTVAETLNQFIMEGITVRKDDLFRCAKTLRKFRRPQHAFEIFDWMEKRKMTFSVSDHAICLDLIGKTKGLEAAENYFNNLDPSAKNHQSTYGALMNCYCVELEEEKAKAHFEIMDELNFVNNSLPFNNMMSMYMRLSQPEKVPVLVDAMKQRGISPCGVTYSIWMQSCGSLNDLDGLEKIIDEMGKDSEAKTTWNTFSNLAAIYTKAGLYEKADSALKSMEEKMNPNNRDSHHFLMSLYAGISKGPEVYRVWESLKKARPEVNNLSYLVMLQAMSKLGDLDGIKKIFTEWESKCWAYDMRLANIAINTYLKGNMYEEAEKILDGAMKKSKGPFSKARQLLMIHLLENDKADLAMKHLEAAVSDSAENKDEWGWSSELVSLFFLHFEKAKDVDGAEDFCKILSNWKPLDSETMTFLIKTYAAAEKTSPDMRERLSQQQIEVSEEIQDLLKTVCP.

The transit peptide at 1–18 (MNFRNLIASGSRLGKRFC) directs the protein to the mitochondrion. 7 PPR repeats span residues 171 to 205 (HQSTYGALMNCYCVELEEEKAKAHFEIMDELNFVN), 206 to 240 (NSLPFNNMMSMYMRLSQPEKVPVLVDAMKQRGISP), 241 to 275 (CGVTYSIWMQSCGSLNDLDGLEKIIDEMGKDSEAK), 277 to 307 (TWNTFSNLAAIYTKAGLYEKADSALKSMEEK), 312 to 346 (NRDSHHFLMSLYAGISKGPEVYRVWESLKKARPEV), 347 to 377 (NNLSYLVMLQAMSKLGDLDGIKKIFTEWESK), and 382 to 416 (DMRLANIAINTYLKGNMYEEAEKILDGAMKKSKGP).

Belongs to the PPR family. P subfamily.

The protein resides in the mitochondrion. This is Pentatricopeptide repeat-containing protein At1g02370, mitochondrial from Arabidopsis thaliana (Mouse-ear cress).